Reading from the N-terminus, the 1475-residue chain is Mediator of RNA polymerase II transcription subunit 1.1 (1475 aa).

3 disordered regions span residues S579 to M600, G645 to E894, and P908 to E1475. Residues P655–P666 show a composition bias toward low complexity. Residues Q755–P766 show a composition bias toward polar residues. Over residues H767–S800 the composition is skewed to low complexity. Over residues T810–D819 the composition is skewed to acidic residues. Over residues S829 to P838 the composition is skewed to low complexity. Pro residues predominate over residues T869–F880. Residues Q915–S929 show a composition bias toward low complexity. Residues P941 to P952 are compositionally biased toward pro residues. Composition is skewed to low complexity over residues Q969 to A989 and Q1037 to S1049. Composition is skewed to basic and acidic residues over residues P1052–I1070, V1080–P1148, and E1155–S1180. The stretch at D1098–D1135 forms a coiled coil. Residues K1181–L1193 are compositionally biased toward polar residues. Residues P1199 to A1215 are compositionally biased toward basic and acidic residues. Over residues A1242 to Q1252 the composition is skewed to low complexity. A compositionally biased stretch (pro residues) spans P1281–T1291. The segment covering P1308 to R1317 has biased composition (polar residues). Pro residues-rich tracts occupy residues P1320–D1334 and P1425–P1440.

It belongs to the Mediator complex subunit 1 family. As to quaternary structure, component of the Mediator complex.

It is found in the nucleus. Functionally, component of the Mediator complex, a coactivator involved in the regulated transcription of nearly all RNA polymerase II-dependent genes. Mediator functions as a bridge to convey information from gene-specific regulatory proteins to the basal RNA polymerase II transcription machinery. Mediator is recruited to promoters by direct interactions with regulatory proteins and serves as a scaffold for the assembly of a functional preinitiation complex with RNA polymerase II and the general transcription factors. This Caenorhabditis elegans protein is Mediator of RNA polymerase II transcription subunit 1.1 (sop-3).